Consider the following 304-residue polypeptide: Acetyl-coenzyme A carboxylase carboxyl transferase subunit beta (304 aa).

The 270-residue stretch at Val-23–Val-292 folds into the CoA carboxyltransferase N-terminal domain. Residues Cys-27, Cys-30, Cys-46, and Cys-49 each contribute to the Zn(2+) site. Residues Cys-27 to Cys-49 form a C4-type zinc finger. Positions Asn-284–Ala-304 are disordered. Pro residues predominate over residues Pro-295–Ala-304.

This sequence belongs to the AccD/PCCB family. As to quaternary structure, acetyl-CoA carboxylase is a heterohexamer composed of biotin carboxyl carrier protein (AccB), biotin carboxylase (AccC) and two subunits each of ACCase subunit alpha (AccA) and ACCase subunit beta (AccD). Zn(2+) is required as a cofactor.

The protein localises to the cytoplasm. The catalysed reaction is N(6)-carboxybiotinyl-L-lysyl-[protein] + acetyl-CoA = N(6)-biotinyl-L-lysyl-[protein] + malonyl-CoA. It functions in the pathway lipid metabolism; malonyl-CoA biosynthesis; malonyl-CoA from acetyl-CoA: step 1/1. In terms of biological role, component of the acetyl coenzyme A carboxylase (ACC) complex. Biotin carboxylase (BC) catalyzes the carboxylation of biotin on its carrier protein (BCCP) and then the CO(2) group is transferred by the transcarboxylase to acetyl-CoA to form malonyl-CoA. This Escherichia coli O6:K15:H31 (strain 536 / UPEC) protein is Acetyl-coenzyme A carboxylase carboxyl transferase subunit beta.